Reading from the N-terminus, the 179-residue chain is Lipoprotein signal peptidase (179 aa).

4 consecutive transmembrane segments (helical) span residues 10–30 (LFQF…AIII), 48–68 (VPVL…AFSF), 75–95 (WQHY…IFWL), and 101–121 (NAMI…GNLI). Catalysis depends on residues aspartate 131 and aspartate 149. A helical transmembrane segment spans residues 141-161 (HFPAFNIADSAITIGTILLLI).

This sequence belongs to the peptidase A8 family.

The protein resides in the cell inner membrane. The catalysed reaction is Release of signal peptides from bacterial membrane prolipoproteins. Hydrolyzes -Xaa-Yaa-Zaa-|-(S,diacylglyceryl)Cys-, in which Xaa is hydrophobic (preferably Leu), and Yaa (Ala or Ser) and Zaa (Gly or Ala) have small, neutral side chains.. The protein operates within protein modification; lipoprotein biosynthesis (signal peptide cleavage). This protein specifically catalyzes the removal of signal peptides from prolipoproteins. This chain is Lipoprotein signal peptidase, found in Acinetobacter baylyi (strain ATCC 33305 / BD413 / ADP1).